Here is a 709-residue protein sequence, read N- to C-terminus: ATP-binding cassette sub-family F member 3 (709 aa).

At Ala2 the chain carries N-acetylalanine. Ser83 bears the Phosphoserine mark. Over residues 129 to 143 the composition is skewed to basic and acidic residues; it reads RLKAKQEKRSEKDTL. Positions 129 to 171 are disordered; that stretch reads RLKAKQEKRSEKDTLKTSNPLVLEEASASQAGSRKESRLESSG. A phosphoserine mark is found at Ser155, Ser157, and Ser161. Residues 161–171 show a composition bias toward basic and acidic residues; the sequence is SRKESRLESSG. ABC transporter domains lie at 178–424 and 492–707; these read VRIE…LNQQ and LQLD…RREG. 210–217 provides a ligand contact to ATP; the sequence is GRNGLGKT. The residue at position 283 (Ser283) is a Phosphoserine. An ATP-binding site is contributed by 525 to 532; that stretch reads GENGAGKS.

It belongs to the ABC transporter superfamily. ABCF family. EF3 subfamily.

Functionally, displays an antiviral effect against flaviviruses such as west Nile virus (WNV) in the presence of OAS1B. This chain is ATP-binding cassette sub-family F member 3 (ABCF3), found in Homo sapiens (Human).